Here is a 58-residue protein sequence, read N- to C-terminus: Large ribosomal subunit protein eL20 (58 aa).

Residues 37-58 form a disordered region; the sequence is TTVGSQHNRKRPQIEIKEVSAA. The span at 48-58 shows a compositional bias: basic and acidic residues; that stretch reads PQIEIKEVSAA.

The protein belongs to the eukaryotic ribosomal protein eL20 family. As to quaternary structure, part of the 50S ribosomal subunit. Binds 23S rRNA.

The polypeptide is Large ribosomal subunit protein eL20 (Halorubrum lacusprofundi (strain ATCC 49239 / DSM 5036 / JCM 8891 / ACAM 34)).